Reading from the N-terminus, the 567-residue chain is Multidrug and toxin extrusion protein 1 (567 aa).

At Met1 the chain carries N-acetylmethionine. Residues 1–37 (MERTEESAPGPGGADAASERRGLRCLLLPGFLEELRA) are Cytoplasmic-facing. Ser18 carries the post-translational modification Phosphoserine. Residues 38–58 (LLVLAGPAFLAQLMMFLISFI) form a helical membrane-spanning segment. Residues 59–72 (SSVFCGHLGKLELD) are Extracellular-facing. The helical transmembrane segment at 73-93 (AVTLAIAVINVTGISVGHGLS) threads the bilayer. Residues 94–120 (SACDTLISQTYGSQNLKHVGVILQRGT) lie on the Cytoplasmic side of the membrane. Residues 121–141 (LILLLCCFPCWALFINTEQIL) traverse the membrane as a helical segment. Residues 142–152 (LLFRQDPDVSR) are Extracellular-facing. The chain crosses the membrane as a helical span at residues 153–173 (LTQTYVMIFIPALPAAFLYTL). Over 174–187 (QVKYLLNQGIVLPQ) the chain is Cytoplasmic. Residues 188 to 208 (IMTGIAANLVNALANYVFLYH) form a helical membrane-spanning segment. The Extracellular portion of the chain corresponds to 209–216 (LHLGVMGS). A helical transmembrane segment spans residues 217 to 237 (ALANTISQFALAIFLFLYILW). At 238–257 (RRLHQATWGGWSWECLQDWA) the chain is on the cytoplasmic side. The chain crosses the membrane as a helical span at residues 258-277 (SFLRLAIPSMLMLCIEWWAY). The Extracellular portion of the chain corresponds to 278-295 (EVGSFLSGILGMVELGAQ). A helical transmembrane segment spans residues 296–316 (SITYELAIIVYMIPSGFSVAA). Topologically, residues 317-336 (NVRVGNALGAGNIDQAKKSS) are cytoplasmic. Residues 337-357 (AISLIVTELFAVTFCVLLLGC) traverse the membrane as a helical segment. The Extracellular portion of the chain corresponds to 358–370 (KDLVGYIFTTDRD). The helical transmembrane segment at 371–391 (IVALVAQVIPIYAVSHLFEGL) threads the bilayer. Residues 392–408 (ACTCGGILRGTGNQKVG) lie on the Cytoplasmic side of the membrane. The chain crosses the membrane as a helical span at residues 409 to 429 (AIVNAIGYYVIGLPIGIALMF). Over 430-437 (AAKLGVIG) the chain is Extracellular. The chain crosses the membrane as a helical span at residues 438–458 (LWSGIIICTTCQTTCFLAFIA). The Cytoplasmic segment spans residues 459–543 (RLNWKRACQQ…LSGKQLALRR (85 aa)). Residues 544 to 564 (GLLLLGVVLVLVGGILVRVYI) form a helical membrane-spanning segment. Residues 565 to 567 (RIE) lie on the Extracellular side of the membrane.

The protein belongs to the multi antimicrobial extrusion (MATE) (TC 2.A.66.1) family. In terms of tissue distribution, predominantly expressed in kidney and liver. Also expressed in various cells, including brain glia-like cells and capillaries, pancreatic duct cells, urinary bladder epithelium, adrenal gland cortex, heart, stomach, small intestine, thyroid gland, testes, alpha cells of the islets of Langerhans, Leydig cells, and vitamin A-storing Ito cells. Expressed in heart, stomach, small intestine, bladder, thyroid gland, adrenal gland and testes (at protein level).

The protein resides in the cell membrane. The protein localises to the apical cell membrane. The catalysed reaction is thiamine(out) + H(+)(in) = thiamine(in) + H(+)(out). It carries out the reaction estrone 3-sulfate(in) + H(+)(out) = estrone 3-sulfate(out) + H(+)(in). The enzyme catalyses creatinine(in) + H(+)(out) = creatinine(out) + H(+)(in). It catalyses the reaction agmatine(in) + H(+)(out) = agmatine(out) + H(+)(in). Its function is as follows. Multidrug efflux pump that functions as a H(+)/organic cation antiporter. Plays a physiological role in the excretion of cationic compounds including endogenous metabolites, drugs, toxins through the kidney and liver, into urine and bile respectively. Mediates the efflux of endogenous compounds such as creatinine, vitamin B1/thiamine, agmatine and estrone-3-sulfate. May also contribute to regulate the transport of cationic compounds in testis across the blood-testis-barrier. This is Multidrug and toxin extrusion protein 1 (Slc47a1) from Mus musculus (Mouse).